A 462-amino-acid polypeptide reads, in one-letter code: Retinoic acid receptor alpha (462 aa).

Residues 1–87 (MASNSSSCPT…PPPLPRIYKP (87 aa)) form a modulating region. The span at 52–64 (GYSTPSPATIETQ) shows a compositional bias: polar residues. Residues 52 to 77 (GYSTPSPATIETQSSSSEEIVPSPPS) form a disordered region. The residue at position 77 (serine 77) is a Phosphoserine; by CDK7. 2 consecutive NR C4-type zinc fingers follow at residues 88 to 108 (CFVC…CEGC) and 124 to 148 (CHRD…LQKC). The segment at residues 88–153 (CFVCQDKSSG…RLQKCFDVGM (66 aa)) is a DNA-binding region (nuclear receptor). Serine 96 carries the phosphoserine; by PKB/AKT1 modification. Residues 154 to 182 (SKESVRNDRNKKKKEAPKPECSESYTLTP) are hinge. Glycyl lysine isopeptide (Lys-Gly) (interchain with G-Cter in SUMO) cross-links involve residues lysine 166 and lysine 171. Residues 183–417 (EVGELIEKVR…PLIQEMLENS (235 aa)) form the NR LBD domain. Residue serine 219 is modified to Phosphoserine; by PKA. Cysteine 235 is a binding site for all-trans-retinoate. Positions 254–258 (IADQI) match the UBR5-degron motif. Serine 287 is an all-trans-retinoate binding site. Lysine 347 is subject to N6,N6,N6-trimethyllysine. The residue at position 369 (serine 369) is a Phosphoserine; by PKA and RPS6KA5. Residue lysine 399 forms a Glycyl lysine isopeptide (Lys-Gly) (interchain with G-Cter in SUMO) linkage. Residues 404–419 (GSMPPLIQEMLENSEG) form a required for binding corepressor NCOR1 region. A 9aaTAD motif is present at residues 408–416 (PLIQEMLEN). The segment at 420–462 (LDTLSGQSGGGTRDGGGLAPPPGSCSPSLSPSSHRSSPATQSP) is disordered. A compositionally biased stretch (gly residues) spans 426–437 (QSGGGTRDGGGL). Over residues 444 to 462 (CSPSLSPSSHRSSPATQSP) the composition is skewed to low complexity.

Belongs to the nuclear hormone receptor family. NR1 subfamily. Heterodimer; with RXRA. Binds DNA preferentially as a heterodimer. RXRA serves as enhancer to induce RARA binding to RARE. Interacts with RXRG. Interacts with NCOA3 and NCOA6 coactivators, leading to a strong increase of transcription of target genes. Interacts with NCOA7; the interaction requires ligand-binding. Interacts (via the ligand-binding domain) with PRAME; interaction is direct and ligand (retinoic acid)-dependent. Interacts with PRKAR1A; the interaction negatively regulates RARA transcriptional activity. Interacts with NCOR1; the interaction occurs in the absence of ligand and represses transcriptional activity. Interacts with NCOR2. Interacts with PRMT2. Interacts with LRIF1. Interacts with ASXL1 and NCOA1. Interacts with ACTN4. Interacts with CDK7; the interaction is enhanced by interaction with GTF2H3. Interacts with GTF2H3; the interaction requires prior phosphorylation on Ser-369 which then enhances interaction with CDK7. In a complex with HDAC3, HDAC5 and HDAC7; the HDACs serve as corepressors of RARA, causing its deacetylation and inhibition of RARE DNA element binding; association with HDAC3, HDAC5 and HDAC7 is increased upon oscillatory shear stress. In the absence of hormonal ligand, interacts with TACC1. Phosphorylated on serine and threonine residues. Phosphorylation does not change during cell cycle. Phosphorylation on Ser-77 is crucial for the N-terminal AF1 transcriptional activity. Under stress conditions, MAPK8 enhances phosphorylation on Thr-181, Ser-445 and Ser-461 leading to RARA ubiquitination and degradation. Phosphorylation by AKT1 inhibits the transactivation activity. On retinoic acid stimulation, phosphorylation on Ser-369 by RPS6KA5 promotes interaction with GTF2H3 and the CDK7-mediated phosphorylation of Ser-77. In terms of processing, ubiquitinated by UBR5, leading to its degradation: UBR5 specifically recognizes and binds ligand-bound RARA when it is not associated with coactivators (NCOAs). In presence of NCOAs, the UBR5-degron is not accessible, preventing its ubiquitination and degradation. Post-translationally, sumoylated with SUMO2, mainly on Lys-399 which is also required for SENP6 binding. On all-trans retinoic acid (ATRA) binding, a conformational change may occur that allows sumoylation on two additional site, Lys-166 and Lys-171. Probably desumoylated by SENP6. Sumoylation levels determine nuclear localization and regulate ATRA-mediated transcriptional activity. Acetylated; acetylation is increased upon pulsatile shear stress and decreased upon oscillatory shear stress. In terms of tissue distribution, expressed in Sertoli cells and germ cells.

It localises to the nucleus. It is found in the cytoplasm. Receptor for retinoic acid. Retinoic acid receptors bind as heterodimers to their target response elements in response to their ligands, all-trans or 9-cis retinoic acid, and regulate gene expression in various biological processes. The RXR/RAR heterodimers bind to the retinoic acid response elements (RARE) composed of tandem 5'-AGGTCA-3' sites known as DR1-DR5. In the absence of ligand, the RXR-RAR heterodimers associate with a multiprotein complex containing transcription corepressors that induce histone deacetylation, chromatin condensation and transcriptional suppression. On ligand binding, the corepressors dissociate from the receptors and associate with the coactivators leading to transcriptional activation. Formation of heterocomplex with histone deacetylases might lead to inhibition of RARE DNA element binding and to transcriptional repression. Transcriptional activation and RARE DNA element binding might be supported by the transcription factor KLF2. RARA plays an essential role in the regulation of retinoic acid-induced germ cell development during spermatogenesis. Has a role in the survival of early spermatocytes at the beginning prophase of meiosis. In Sertoli cells, may promote the survival and development of early meiotic prophase spermatocytes. In concert with RARG, required for skeletal growth, matrix homeostasis and growth plate function. Together with RXRA, positively regulates microRNA-10a expression, thereby inhibiting the GATA6/VCAM1 signaling response to pulsatile shear stress in vascular endothelial cells. In association with HDAC3, HDAC5 and HDAC7 corepressors, plays a role in the repression of microRNA-10a and thereby promotes the inflammatory response. The chain is Retinoic acid receptor alpha (Rara) from Mus musculus (Mouse).